Here is a 247-residue protein sequence, read N- to C-terminus: Phycocyanobilin:ferredoxin oxidoreductase (247 aa).

The protein belongs to the HY2 family.

It carries out the reaction (2R,3Z)-phycocyanobilin + 4 oxidized [2Fe-2S]-[ferredoxin] = biliverdin IXalpha + 4 reduced [2Fe-2S]-[ferredoxin] + 4 H(+). Functionally, catalyzes the four-electron reduction of biliverdin IX-alpha (2-electron reduction at both the A and D rings); the reaction proceeds via an isolatable 2-electron intermediate, 181,182-dihydrobiliverdin. The chain is Phycocyanobilin:ferredoxin oxidoreductase from Synechococcus sp. (strain CC9605).